A 347-amino-acid chain; its full sequence is MTDDLAPFDFELPRDHIATEPARPRDSATLLHVRPGLPPDPHVIRDLPDFLREGDLLIANNTAVIRAQLAATRGEAKIGLTLDRILANGSWHALARNSRKLKPQDILHFGDDPVTATVIENEGDGAVSIRFSVEGDEFDAFLERVGALALPPYIERPFGPTKQDDADYRTIFSQYRGAVAAPTAGLHFTPEVLAALDAKGIQRRTLTLHVGAGTFLPVRSTIAEHKMHAEWGEIDAETAAAINETRARGGRIVAVGTTSLRLLESAAREDGTVAPWRGETSIFIKPGYRFKAVDVLMTNFHLPRSTLFMLVCAFSGTETMREAYAYAIANGLRFYSYGDACLLERAP.

The protein belongs to the QueA family. Monomer.

Its subcellular location is the cytoplasm. It catalyses the reaction 7-aminomethyl-7-carbaguanosine(34) in tRNA + S-adenosyl-L-methionine = epoxyqueuosine(34) in tRNA + adenine + L-methionine + 2 H(+). It functions in the pathway tRNA modification; tRNA-queuosine biosynthesis. In terms of biological role, transfers and isomerizes the ribose moiety from AdoMet to the 7-aminomethyl group of 7-deazaguanine (preQ1-tRNA) to give epoxyqueuosine (oQ-tRNA). The polypeptide is S-adenosylmethionine:tRNA ribosyltransferase-isomerase (Gluconobacter oxydans (strain 621H) (Gluconobacter suboxydans)).